Here is a 391-residue protein sequence, read N- to C-terminus: S-adenosylmethionine synthase (391 aa).

An ATP-binding site is contributed by histidine 16. Aspartate 18 provides a ligand contact to Mg(2+). Residue glutamate 44 participates in K(+) binding. Residues glutamate 57 and glutamine 101 each contribute to the L-methionine site. Residues 101-111 form a flexible loop region; it reads QSADIAQGVDA. Residues 166-168, aspartate 244, 250-251, alanine 267, and lysine 271 contribute to the ATP site; these read DAK and RK. Residue aspartate 244 participates in L-methionine binding. Residue lysine 275 participates in L-methionine binding.

The protein belongs to the AdoMet synthase family. As to quaternary structure, homotetramer; dimer of dimers. The cofactor is Mg(2+). K(+) is required as a cofactor.

It is found in the cytoplasm. The enzyme catalyses L-methionine + ATP + H2O = S-adenosyl-L-methionine + phosphate + diphosphate. It functions in the pathway amino-acid biosynthesis; S-adenosyl-L-methionine biosynthesis; S-adenosyl-L-methionine from L-methionine: step 1/1. Functionally, catalyzes the formation of S-adenosylmethionine (AdoMet) from methionine and ATP. The overall synthetic reaction is composed of two sequential steps, AdoMet formation and the subsequent tripolyphosphate hydrolysis which occurs prior to release of AdoMet from the enzyme. The protein is S-adenosylmethionine synthase of Zymomonas mobilis subsp. mobilis (strain ATCC 31821 / ZM4 / CP4).